The primary structure comprises 329 residues: uncharacterized protein (329 aa).

The region spanning 38–184 (IVKLILKSQE…MACLMRAKNF (147 aa)) is the SIS domain. 56 to 61 (GVGKSA) provides a ligand contact to ATP. CBS domains lie at 211-267 (QTTN…GVSL) and 270-329 (EVRH…GLKA).

The protein belongs to the SIS family. GutQ/KpsF subfamily.

This is an uncharacterized protein from Helicobacter pylori (strain ATCC 700392 / 26695) (Campylobacter pylori).